The following is a 323-amino-acid chain: Mas-related G-protein coupled receptor member X1 (323 aa).

Topologically, residues Met1–Ser30 are extracellular. An N-linked (GlcNAc...) asparagine glycan is attached at Asn16. A helical transmembrane segment spans residues Phe31–Leu51. Topologically, residues Gly52–Ala59 are cytoplasmic. The chain crosses the membrane as a helical span at residues Ile60–Ile80. Topologically, residues Asp81–Glu100 are extracellular. A helical transmembrane segment spans residues Ile101 to Ser121. The Cytoplasmic portion of the chain corresponds to Thr122–Ser143. A helical transmembrane segment spans residues Ala144–Phe164. Over Ser165–Asp180 the chain is Extracellular. The helical transmembrane segment at Phe181 to Leu201 threads the bilayer. Topologically, residues Leu202–Met226 are cytoplasmic. A helical transmembrane segment spans residues Val227–Ile247. Residues His248 to Gln258 are Extracellular-facing. A helical membrane pass occupies residues Val259 to Gly279. The Cytoplasmic portion of the chain corresponds to Ser280–Cys323.

The protein belongs to the G-protein coupled receptor 1 family. Mas subfamily. Uniquely localized in a subset of small dorsal root and trigeminal sensory neurons. Associated preferentially with IB4 class of small-diameter somatosensory afferents (also known as nociceptors).

Its subcellular location is the cell membrane. In terms of biological role, orphan receptor activated by neuropeptides terminating in Arg-Phe or Arg-Phe-amide. Mediates its action by association with G proteins that activate a phosphatidylinositol-calcium second messenger system. Its effect is mediated by G(q) and G(11) proteins. May regulate the function of nociceptive neurons by modulation of pain perception. This is Mas-related G-protein coupled receptor member X1 (Mrgprx1) from Rattus norvegicus (Rat).